Reading from the N-terminus, the 101-residue chain is Movement protein (101 aa).

Residues 30–50 traverse the membrane as a helical segment; sequence EVAILSFVALICIYLLYLWVL.

It belongs to the mastrevirus movement protein family. Interacts with the capsid protein (CP). Part of a MP-CP-viral DNA complex.

Its subcellular location is the host membrane. Involved in the viral transport within, and between cells. This chain is Movement protein, found in Maize streak virus genotype D (isolate Raw) (MSV).